The sequence spans 534 residues: Probable bifunctional tRNA threonylcarbamoyladenosine biosynthesis protein (534 aa).

Positions 1–325 are kae1; it reads MLCLGIEGTA…YRTDEVDVPW (325 aa). Residues His-108, His-112, and Tyr-129 each contribute to the Fe cation site. L-threonylcarbamoyladenylate contacts are provided by residues 129–133, Asp-161, Gly-174, Glu-178, and Asn-258; that span reads YVSGG. Residue Asp-286 coordinates Fe cation. The Protein kinase domain maps to 335–534; sequence LPPDILAKGA…EIESRGRYTD (200 aa). Residues 340-348 and Lys-361 each bind ATP; that span reads LAKGAEANI. Asp-451 functions as the Proton acceptor; for kinase activity in the catalytic mechanism.

It in the N-terminal section; belongs to the KAE1 / TsaD family. This sequence in the C-terminal section; belongs to the protein kinase superfamily. Tyr protein kinase family. BUD32 subfamily. Component of the KEOPS complex that consists of Kae1, Bud32, Cgi121 and Pcc1; the whole complex dimerizes. Fe(2+) serves as cofactor.

The protein resides in the cytoplasm. The catalysed reaction is L-seryl-[protein] + ATP = O-phospho-L-seryl-[protein] + ADP + H(+). It carries out the reaction L-threonyl-[protein] + ATP = O-phospho-L-threonyl-[protein] + ADP + H(+). It catalyses the reaction L-threonylcarbamoyladenylate + adenosine(37) in tRNA = N(6)-L-threonylcarbamoyladenosine(37) in tRNA + AMP + H(+). Required for the formation of a threonylcarbamoyl group on adenosine at position 37 (t(6)A37) in tRNAs that read codons beginning with adenine. Is a component of the KEOPS complex that is probably involved in the transfer of the threonylcarbamoyl moiety of threonylcarbamoyl-AMP (TC-AMP) to the N6 group of A37. The Kae1 domain likely plays a direct catalytic role in this reaction. The Bud32 domain probably displays kinase activity that regulates Kae1 function. The polypeptide is Probable bifunctional tRNA threonylcarbamoyladenosine biosynthesis protein (Methanothermobacter thermautotrophicus (strain ATCC 29096 / DSM 1053 / JCM 10044 / NBRC 100330 / Delta H) (Methanobacterium thermoautotrophicum)).